Consider the following 432-residue polypeptide: D-amino acid dehydrogenase (432 aa).

Position 3–17 (3–17) interacts with FAD; that stretch reads VVILGSGVVGVASAW.

It belongs to the DadA oxidoreductase family. The cofactor is FAD.

It carries out the reaction a D-alpha-amino acid + A + H2O = a 2-oxocarboxylate + AH2 + NH4(+). The protein operates within amino-acid degradation; D-alanine degradation; NH(3) and pyruvate from D-alanine: step 1/1. Oxidative deamination of D-amino acids. This Shigella boydii serotype 4 (strain Sb227) protein is D-amino acid dehydrogenase.